Consider the following 306-residue polypeptide: NAD kinase 1 (306 aa).

Aspartate 67 acts as the Proton acceptor in catalysis. NAD(+) is bound by residues 67–68 (DG), 149–150 (NE), and aspartate 181.

Belongs to the NAD kinase family. It depends on a divalent metal cation as a cofactor.

The protein localises to the cytoplasm. It catalyses the reaction NAD(+) + ATP = ADP + NADP(+) + H(+). Functionally, involved in the regulation of the intracellular balance of NAD and NADP, and is a key enzyme in the biosynthesis of NADP. Catalyzes specifically the phosphorylation on 2'-hydroxyl of the adenosine moiety of NAD to yield NADP. This Thermosynechococcus vestitus (strain NIES-2133 / IAM M-273 / BP-1) protein is NAD kinase 1.